Reading from the N-terminus, the 647-residue chain is Threonine--tRNA ligase (647 aa).

Positions 1–63 (MEVRVEGQMV…PAGCTGIEPV (63 aa)) constitute a TGS domain. The catalytic stretch occupies residues 244 to 535 (DHRKLGRELS…LVENFAGALP (292 aa)). Positions 336, 387, and 512 each coordinate Zn(2+).

This sequence belongs to the class-II aminoacyl-tRNA synthetase family. In terms of assembly, homodimer. It depends on Zn(2+) as a cofactor.

It is found in the cytoplasm. It catalyses the reaction tRNA(Thr) + L-threonine + ATP = L-threonyl-tRNA(Thr) + AMP + diphosphate + H(+). In terms of biological role, catalyzes the attachment of threonine to tRNA(Thr) in a two-step reaction: L-threonine is first activated by ATP to form Thr-AMP and then transferred to the acceptor end of tRNA(Thr). Also edits incorrectly charged L-seryl-tRNA(Thr). In Desulfovibrio desulfuricans (strain ATCC 27774 / DSM 6949 / MB), this protein is Threonine--tRNA ligase.